Consider the following 360-residue polypeptide: Photosystem II protein D1 (360 aa).

3 helical membrane-spanning segments follow: residues 29 to 46 (YIGW…TATS), 118 to 133 (HFLL…EWEL), and 142 to 156 (WIFV…AASA). A chlorophyll a-binding site is contributed by His-118. A pheophytin a-binding site is contributed by Tyr-126. [CaMn4O5] cluster-binding residues include Asp-170 and Glu-189. A helical membrane pass occupies residues 197–218 (FHMAGVAGVFGGSLFSAMHGSL). Position 198 (His-198) interacts with chlorophyll a. Residues His-215 and 264-265 (SF) contribute to the a quinone site. His-215 lines the Fe cation pocket. His-272 contributes to the Fe cation binding site. Residues 274-288 (FLAAWPVVGIWLTAL) form a helical membrane-spanning segment. Residues His-332, Glu-333, Asp-342, and Ala-344 each coordinate [CaMn4O5] cluster. The propeptide occupies 345–360 (SNEVLPVAVNAPAVNG).

It belongs to the reaction center PufL/M/PsbA/D family. As to quaternary structure, PSII is composed of 1 copy each of membrane proteins PsbA, PsbB, PsbC, PsbD, PsbE, PsbF, PsbH, PsbI, PsbJ, PsbK, PsbL, PsbM, PsbT, PsbX, PsbY, PsbZ, Psb30/Ycf12, at least 3 peripheral proteins of the oxygen-evolving complex and a large number of cofactors. It forms dimeric complexes. The D1/D2 heterodimer binds P680, chlorophylls that are the primary electron donor of PSII, and subsequent electron acceptors. It shares a non-heme iron and each subunit binds pheophytin, quinone, additional chlorophylls, carotenoids and lipids. D1 provides most of the ligands for the Mn4-Ca-O5 cluster of the oxygen-evolving complex (OEC). There is also a Cl(-1) ion associated with D1 and D2, which is required for oxygen evolution. The PSII complex binds additional chlorophylls, carotenoids and specific lipids. is required as a cofactor. In terms of processing, tyr-161 forms a radical intermediate that is referred to as redox-active TyrZ, YZ or Y-Z. Post-translationally, C-terminally processed by CTPA; processing is essential to allow assembly of the oxygen-evolving complex and thus photosynthetic growth.

The protein localises to the plastid. It localises to the chloroplast thylakoid membrane. It carries out the reaction 2 a plastoquinone + 4 hnu + 2 H2O = 2 a plastoquinol + O2. In terms of biological role, photosystem II (PSII) is a light-driven water:plastoquinone oxidoreductase that uses light energy to abstract electrons from H(2)O, generating O(2) and a proton gradient subsequently used for ATP formation. It consists of a core antenna complex that captures photons, and an electron transfer chain that converts photonic excitation into a charge separation. The D1/D2 (PsbA/PsbD) reaction center heterodimer binds P680, the primary electron donor of PSII as well as several subsequent electron acceptors. This Heterosigma akashiwo (Chromophytic alga) protein is Photosystem II protein D1.